The sequence spans 759 residues: NADP-dependent malic enzyme (759 aa).

The tract at residues 1-428 (MDEQLKQSAL…KLTEFVYKTN (428 aa)) is malic enzyme. The Proton donor role is filled by tyrosine 39. The active-site Proton acceptor is lysine 94. Positions 136, 137, and 162 each coordinate a divalent metal cation. NADP(+) contacts are provided by residues 195–198 (AGAA), asparagine 288, and asparagine 320. Residues 429–759 (LFMKPIFSQA…AVVEAQTTPL (331 aa)) are phosphate acetyltransferase.

The protein in the N-terminal section; belongs to the malic enzymes family. It in the C-terminal section; belongs to the phosphate acetyltransferase and butyryltransferase family. The cofactor is Mg(2+). Mn(2+) is required as a cofactor.

It carries out the reaction (S)-malate + NADP(+) = pyruvate + CO2 + NADPH. The enzyme catalyses oxaloacetate + H(+) = pyruvate + CO2. The chain is NADP-dependent malic enzyme (maeB) from Salmonella typhimurium (strain LT2 / SGSC1412 / ATCC 700720).